The sequence spans 258 residues: Imidazole glycerol phosphate synthase subunit HisF (258 aa).

Catalysis depends on residues Asp-11 and Asp-130.

It belongs to the HisA/HisF family. In terms of assembly, heterodimer of HisH and HisF.

The protein localises to the cytoplasm. It catalyses the reaction 5-[(5-phospho-1-deoxy-D-ribulos-1-ylimino)methylamino]-1-(5-phospho-beta-D-ribosyl)imidazole-4-carboxamide + L-glutamine = D-erythro-1-(imidazol-4-yl)glycerol 3-phosphate + 5-amino-1-(5-phospho-beta-D-ribosyl)imidazole-4-carboxamide + L-glutamate + H(+). It participates in amino-acid biosynthesis; L-histidine biosynthesis; L-histidine from 5-phospho-alpha-D-ribose 1-diphosphate: step 5/9. Functionally, IGPS catalyzes the conversion of PRFAR and glutamine to IGP, AICAR and glutamate. The HisF subunit catalyzes the cyclization activity that produces IGP and AICAR from PRFAR using the ammonia provided by the HisH subunit. This chain is Imidazole glycerol phosphate synthase subunit HisF, found in Shigella sonnei (strain Ss046).